A 569-amino-acid polypeptide reads, in one-letter code: Urease subunit alpha (569 aa).

Positions 131–569 constitute a Urease domain; the sequence is GGIDTHIHFI…LPLAQRYLLL (439 aa). Ni(2+) contacts are provided by His-136, His-138, and Lys-219. Position 219 is an N6-carboxylysine (Lys-219). His-221 serves as a coordination point for substrate. Ni(2+)-binding residues include His-248 and His-274. His-322 functions as the Proton donor in the catalytic mechanism. Asp-362 provides a ligand contact to Ni(2+).

It belongs to the metallo-dependent hydrolases superfamily. Urease alpha subunit family. In terms of assembly, heterotrimer of UreA (gamma), UreB (beta) and UreC (alpha) subunits. Three heterotrimers associate to form the active enzyme. Requires Ni cation as cofactor. In terms of processing, carboxylation allows a single lysine to coordinate two nickel ions.

Its subcellular location is the cytoplasm. It carries out the reaction urea + 2 H2O + H(+) = hydrogencarbonate + 2 NH4(+). It functions in the pathway nitrogen metabolism; urea degradation; CO(2) and NH(3) from urea (urease route): step 1/1. This Synechococcus sp. (strain CC9605) protein is Urease subunit alpha.